The following is a 150-amino-acid chain: Urease accessory protein UreE (150 aa).

Belongs to the UreE family.

The protein localises to the cytoplasm. Functionally, involved in urease metallocenter assembly. Binds nickel. Probably functions as a nickel donor during metallocenter assembly. The chain is Urease accessory protein UreE from Parasynechococcus marenigrum (strain WH8102).